The primary structure comprises 250 residues: Tripartite motif-containing protein 73 (250 aa).

An RING-type zinc finger spans residues 16–57 (CPICLEVFKESLMLQCGHSYCKGCLVSLSYHLDTKVRCPMCW). The B box-type zinc finger occupies 84–125 (PEPKVCVHHRNPLSLFCEKDQELICGLCGLLGSHQHHPVTPV). Cys89, His92, Cys111, and His117 together coordinate Zn(2+). Coiled coils occupy residues 125–169 (VSTV…NESD) and 204–235 (LVAS…FGNE).

It belongs to the TRIM/RBCC family.

The chain is Tripartite motif-containing protein 73 (TRIM73) from Homo sapiens (Human).